The sequence spans 608 residues: Probable adenylate kinase 5, chloroplastic (608 aa).

Over residues Met-1–Pro-20 the composition is skewed to low complexity. A disordered region spans residues Met-1–Cys-44. A chloroplast-targeting transit peptide spans Met-1–Arg-75. Ala-99–Thr-104 is a binding site for ATP. The NMP stretch occupies residues Ser-119–Val-148. AMP contacts are provided by residues Thr-120, Arg-125, Met-146–Val-148, Gly-175–Arg-178, and Gln-182. ATP-binding positions include Arg-209, Arg-213, and Ile-222–Tyr-223. Residues Gly-212–Asp-245 are LID. AMP contacts are provided by Arg-242 and Arg-253.

It belongs to the adenylate kinase family.

The protein localises to the plastid. It is found in the chloroplast. It catalyses the reaction AMP + ATP = 2 ADP. Functionally, catalyzes the reversible transfer of the terminal phosphate group between ATP and AMP. Plays an important role in cellular energy homeostasis and in adenine nucleotide metabolism. In Oryza sativa subsp. japonica (Rice), this protein is Probable adenylate kinase 5, chloroplastic.